Consider the following 290-residue polypeptide: Phosphatidylserine decarboxylase proenzyme (290 aa).

Active-site charge relay system; for autoendoproteolytic cleavage activity residues include Asp-96, His-153, and Ser-257. Ser-257 serves as the catalytic Schiff-base intermediate with substrate; via pyruvic acid; for decarboxylase activity. Position 257 is a pyruvic acid (Ser); by autocatalysis (Ser-257).

Belongs to the phosphatidylserine decarboxylase family. PSD-B subfamily. Prokaryotic type I sub-subfamily. Heterodimer of a large membrane-associated beta subunit and a small pyruvoyl-containing alpha subunit. Pyruvate is required as a cofactor. In terms of processing, is synthesized initially as an inactive proenzyme. Formation of the active enzyme involves a self-maturation process in which the active site pyruvoyl group is generated from an internal serine residue via an autocatalytic post-translational modification. Two non-identical subunits are generated from the proenzyme in this reaction, and the pyruvate is formed at the N-terminus of the alpha chain, which is derived from the carboxyl end of the proenzyme. The autoendoproteolytic cleavage occurs by a canonical serine protease mechanism, in which the side chain hydroxyl group of the serine supplies its oxygen atom to form the C-terminus of the beta chain, while the remainder of the serine residue undergoes an oxidative deamination to produce ammonia and the pyruvoyl prosthetic group on the alpha chain. During this reaction, the Ser that is part of the protease active site of the proenzyme becomes the pyruvoyl prosthetic group, which constitutes an essential element of the active site of the mature decarboxylase.

Its subcellular location is the cell membrane. The enzyme catalyses a 1,2-diacyl-sn-glycero-3-phospho-L-serine + H(+) = a 1,2-diacyl-sn-glycero-3-phosphoethanolamine + CO2. It participates in phospholipid metabolism; phosphatidylethanolamine biosynthesis; phosphatidylethanolamine from CDP-diacylglycerol: step 2/2. Its function is as follows. Catalyzes the formation of phosphatidylethanolamine (PtdEtn) from phosphatidylserine (PtdSer). This is Phosphatidylserine decarboxylase proenzyme from Haemophilus influenzae (strain ATCC 51907 / DSM 11121 / KW20 / Rd).